Here is a 130-residue protein sequence, read N- to C-terminus: Small ribosomal subunit protein uS8 (130 aa).

The protein belongs to the universal ribosomal protein uS8 family. In terms of assembly, part of the 30S ribosomal subunit. Contacts proteins S5 and S12.

One of the primary rRNA binding proteins, it binds directly to 16S rRNA central domain where it helps coordinate assembly of the platform of the 30S subunit. This Shewanella pealeana (strain ATCC 700345 / ANG-SQ1) protein is Small ribosomal subunit protein uS8.